The chain runs to 522 residues: Monogalactosyldiacylglycerol synthase, chloroplastic (522 aa).

The N-terminal 98 residues, 1 to 98, are a transit peptide targeting the chloroplast; it reads MSHPSTVTSE…RIPLGFSSIG (98 aa).

Belongs to the glycosyltransferase 28 family. In terms of assembly, homodimer. Zn(2+) serves as cofactor.

The protein localises to the plastid. It is found in the chloroplast inner membrane. The catalysed reaction is a 1,2-diacyl-sn-glycerol + UDP-alpha-D-galactose = a 1,2-diacyl-3-O-(beta-D-galactosyl)-sn-glycerol + UDP + H(+). Its activity is regulated as follows. Inhibited by ortho-phenanthroline and UDP (competitive inhibitor relatively to UDP-Gal only) and inactivated by citraconic anhydride, tert-butoxycarbonyl-L-methionine hydrosuccinimidyl ester (SLR) and N-ethylmaleimide (NEM). Functionally, involved in the synthesis of the major structural component of photosynthetic membranes. The 1,2-diacylglycerol substrate preference is 18:2/18:2 &gt; 18:0/18:1 &gt; 18:1/18:1 &gt; 18:1/16:0 &gt; 16:0/18:2 &gt; 18:3/18:3 &gt; 16:0/18:1 &gt; 16:0/16:0 &gt; 18:0/18:0. The polypeptide is Monogalactosyldiacylglycerol synthase, chloroplastic (MGD A) (Spinacia oleracea (Spinach)).